Here is a 215-residue protein sequence, read N- to C-terminus: HTH-type transcriptional repressor FabR (215 aa).

Residues 10–70 (KTRRSLVEAA…TMVDESGLML (61 aa)) enclose the HTH tetR-type domain. Residues 33 to 52 (SLREVAREAGIAPTSFYRHF) constitute a DNA-binding region (H-T-H motif).

As to quaternary structure, homodimer.

It localises to the cytoplasm. Functionally, represses the transcription of fabB, involved in unsaturated fatty acid (UFA) biosynthesis. By controlling UFA production, FabR directly influences the physical properties of the membrane bilayer. This chain is HTH-type transcriptional repressor FabR, found in Shigella boydii serotype 18 (strain CDC 3083-94 / BS512).